The chain runs to 117 residues: Probable non-functional T cell receptor gamma variable (117 aa).

Positions 1-20 are cleaved as a signal peptide; it reads MRWALAVLLAFLSPASQISS. Residues 21–117 enclose the Ig-like domain; that stretch reads NLEGRTKSVT…GFYYCATWDR (97 aa). Cysteine 41 and cysteine 112 are oxidised to a cystine. N-linked (GlcNAc...) asparagine glycosylation occurs at asparagine 105.

In terms of assembly, gamma-delta TR is a heterodimer composed of a gamma and delta chain; disulfide-linked. The gamma-delta TR is associated with the transmembrane signaling CD3 coreceptor proteins following the stoichiometry: a single gamma-delta TR heterodimer associates with one CD3D-CD3E heterodimer, one CD3G-CD3E heterodimer and one CD247 homodimer forming a stable octameric structure. Upon activation, gamma-delta TR complex associates with FCER1G to initiate intracellular signaling.

It localises to the cell membrane. Probable non-functional open reading frame (ORF) of V region of the variable domain of T cell receptor (TR) gamma chain. Non-functional ORF generally cannot participate in the synthesis of a productive T cell receptor (TR) chain due to altered V-(D)-J or switch recombination and/or splicing site (at mRNA level) and/or conserved amino acid change (protein level). Gamma-delta TRs recognize a variety of self and foreign non-peptide antigens frequently expressed at the epithelial boundaries between the host and external environment, including endogenous lipids presented by MH-like protein CD1D and phosphoantigens presented by butyrophilin-like molecule BTN3A1. Upon antigen recognition induces rapid, innate-like immune responses involved in pathogen clearance and tissue repair. Binding of gamma-delta TR complex to antigen triggers phosphorylation of immunoreceptor tyrosine-based activation motifs (ITAMs) in the CD3 chains by the LCK and FYN kinases, allowing the recruitment, phosphorylation, and activation of ZAP70 that facilitates phosphorylation of the scaffolding proteins LCP2 and LAT. This lead to the formation of a supramolecular signalosome that recruits the phospholipase PLCG1, resulting in calcium mobilization and ERK activation, ultimately leading to T cell expansion and differentiation into effector cells. Gamma-delta TRs are produced through somatic rearrangement of a limited repertoire of variable (V), diversity (D), and joining (J) genes. The potential diversity of gamma-delta TRs is conferred by the unique ability to rearrange (D) genes in tandem and to utilize all three reading frames. The combinatorial diversity is considerably increased by the sequence exonuclease trimming and random nucleotide (N) region additions which occur during the V-(D)-J rearrangements. The chain is Probable non-functional T cell receptor gamma variable from Homo sapiens (Human).